The sequence spans 155 residues: 6,7-dimethyl-8-ribityllumazine synthase (155 aa).

5-amino-6-(D-ribitylamino)uracil is bound by residues Y23, 57-59 (AWE), and 81-83 (CVI). 86–87 (ET) is a (2S)-2-hydroxy-3-oxobutyl phosphate binding site. The active-site Proton donor is the H89. A 5-amino-6-(D-ribitylamino)uracil-binding site is contributed by F114. R128 provides a ligand contact to (2S)-2-hydroxy-3-oxobutyl phosphate.

This sequence belongs to the DMRL synthase family.

It catalyses the reaction (2S)-2-hydroxy-3-oxobutyl phosphate + 5-amino-6-(D-ribitylamino)uracil = 6,7-dimethyl-8-(1-D-ribityl)lumazine + phosphate + 2 H2O + H(+). Its pathway is cofactor biosynthesis; riboflavin biosynthesis; riboflavin from 2-hydroxy-3-oxobutyl phosphate and 5-amino-6-(D-ribitylamino)uracil: step 1/2. In terms of biological role, catalyzes the formation of 6,7-dimethyl-8-ribityllumazine by condensation of 5-amino-6-(D-ribitylamino)uracil with 3,4-dihydroxy-2-butanone 4-phosphate. This is the penultimate step in the biosynthesis of riboflavin. In Rhodopirellula baltica (strain DSM 10527 / NCIMB 13988 / SH1), this protein is 6,7-dimethyl-8-ribityllumazine synthase.